Here is a 454-residue protein sequence, read N- to C-terminus: OTU domain-containing protein 1 (454 aa).

Disordered regions lie at residues 36-64 (QSAS…REAA) and 116-257 (LPPP…SRAD). Residues 52–64 (RPPAAATEPREAA) show a composition bias toward low complexity. Positions 116 to 125 (LPPPSAPSPP) are enriched in pro residues. Basic and acidic residues-rich tracts occupy residues 151–164 (DAPD…EHRQ), 193–210 (GEER…RASG), and 219–229 (ALRRQDPEAEA). Residues 282–411 (KYRFHIIPDG…NGHYDAVFDH (130 aa)) enclose the OTU domain. The interval 287-293 (IIPDGNC) is cys-loop. Residue D290 is part of the active site. C293 functions as the Nucleophile in the catalytic mechanism. The tract at residues 342 to 352 (AAQDGAWAGYP) is his-loop. Positions 399–404 (WLSNGH) are variable-loop. Residue H404 is part of the active site. A UIM domain is found at 430–449 (KRDEELAKSMAISLSKMYIE).

The catalysed reaction is Thiol-dependent hydrolysis of ester, thioester, amide, peptide and isopeptide bonds formed by the C-terminal Gly of ubiquitin (a 76-residue protein attached to proteins as an intracellular targeting signal).. Its function is as follows. Deubiquitinating enzyme that specifically hydrolyzes 'Lys-63'-linked polyubiquitin to monoubiquitin. Required for the stability and translation of a subset mRNAs with a high abundance of rare codons by mediating deubiquitination of 40S ribosomal protein RPS10/eS10, thereby antagonizing ZNF598-mediated 40S ubiquitination. The abundance of rare codons in mRNAs can limit the translation rate and can lead to ribosome collisions that trigger activation of ribosome quality control (RQC) pathway by ZNF598. OTUD1-mediated deubiquitination prevents activation of the RQC and subsequent dissociation of ribosomes and stimulates formation of polysomes and translation. This chain is OTU domain-containing protein 1 (Otud1), found in Mus musculus (Mouse).